The primary structure comprises 156 residues: ATP synthase subunit b', organellar chromatophore (156 aa).

A helical transmembrane segment spans residues 23–43; it reads TLPLMAIQVVFLTFILNAIFF.

This sequence belongs to the ATPase B chain family. In terms of assembly, F-type ATPases have 2 components, F(1) - the catalytic core - and F(0) - the membrane proton channel. F(1) has five subunits: alpha(3), beta(3), gamma(1), delta(1), epsilon(1). F(0) has four main subunits: a(1), b(1), b'(1) and c(10-14). The alpha and beta chains form an alternating ring which encloses part of the gamma chain. F(1) is attached to F(0) by a central stalk formed by the gamma and epsilon chains, while a peripheral stalk is formed by the delta, b and b' chains.

The protein resides in the plastid. It localises to the organellar chromatophore thylakoid membrane. Functionally, f(1)F(0) ATP synthase produces ATP from ADP in the presence of a proton or sodium gradient. F-type ATPases consist of two structural domains, F(1) containing the extramembraneous catalytic core and F(0) containing the membrane proton channel, linked together by a central stalk and a peripheral stalk. During catalysis, ATP synthesis in the catalytic domain of F(1) is coupled via a rotary mechanism of the central stalk subunits to proton translocation. Component of the F(0) channel, it forms part of the peripheral stalk, linking F(1) to F(0). The b'-subunit is a diverged and duplicated form of b found in plants and photosynthetic bacteria. The chain is ATP synthase subunit b', organellar chromatophore from Paulinella chromatophora.